The primary structure comprises 1822 residues: Integrin beta-4 (1822 aa).

The N-terminal stretch at 1–27 (MAGPRPSPWARLLLAALISVSLSGTLA) is a signal peptide. The Extracellular portion of the chain corresponds to 28–710 (NRCKKAPVKS…HKKKDCPPGS (683 aa)). The PSI domain maps to 29–73 (RCKKAPVKSCTECVRVDKDCAYCTDEMFRDRRCNTQAELLAAGCQ). 8 disulfides stabilise this stretch: Cys-30–Cys-48, Cys-38–Cys-455, Cys-41–Cys-61, Cys-51–Cys-72, Cys-245–Cys-288, Cys-457–Cys-476, Cys-468–Cys-479, and Cys-481–Cys-490. The VWFA domain occupies 131–329 (DLYILMDFSN…IPIFAVTNYS (199 aa)). 2 residues coordinate Mg(2+): Ser-139 and Ser-141. Residues Ser-141, Asp-144, Asp-145, and Asp-176 each coordinate Ca(2+). The involved in NRG1- and IGF1-binding stretch occupies residues 194 to 199 (WPNSDP). Positions 228, 230, 232, and 233 each coordinate Ca(2+). Glu-233 is a binding site for Mg(2+). N-linked (GlcNAc...) asparagine glycosylation is present at Asn-327. Glu-350 lines the Ca(2+) pocket. I-EGF domains follow at residues 457–491 (CELQKEVRSARCSFNGDFVCGQCVCSEGWSGQTCN), 492–537 (CSTG…QFCE), 538–574 (YDNFQCPRTSGFLCNDRGRCSMGQCVCEPGWTGPSCD), and 575–615 (CPLS…TICE). The N-linked (GlcNAc...) asparagine glycan is linked to Asn-491. Intrachain disulfides connect Cys-492-Cys-520, Cys-503-Cys-518, Cys-512-Cys-523, Cys-525-Cys-536, Cys-543-Cys-557, Cys-551-Cys-562, Cys-564-Cys-573, Cys-575-Cys-598, Cys-582-Cys-596, Cys-590-Cys-601, and Cys-603-Cys-614. N-linked (GlcNAc...) asparagine glycosylation occurs at Asn-579. Asn-617 carries N-linked (GlcNAc...) asparagine glycosylation. Disulfide bonds link Cys-626/Cys-671, Cys-632/Cys-651, Cys-635/Cys-648, and Cys-680/Cys-706. A glycan (N-linked (GlcNAc...) asparagine) is linked at Asn-695. Residues 711–733 (FWWLIPLLLLLLPLLALLLLLCW) traverse the membrane as a helical segment. The segment at 732 to 749 (CWKYCACCKACLALLPCC) is palmitoylated on several cysteines. The Cytoplasmic segment spans residues 734 to 1822 (KYCACCKACL…THMDQQFFQT (1089 aa)). Phosphoserine is present on residues Ser-771, Ser-1069, and Ser-1119. The 106-residue stretch at 979–1084 (VNITIIKEQA…QVRRFHVQLS (106 aa)) folds into the Calx-beta domain. The tract at residues 1113–1140 (TSQMLSSQPPPHGDLGAPQNPNAKAAGS) is disordered. Fibronectin type-III domains follow at residues 1129–1218 (APQN…THQE) and 1222–1321 (EPGR…TQPK). The interval 1400-1444 (LSASSGRSSDAEAPHGPPDDGGAGGKGGSLPRSATPGPPGEHLVN) is disordered. The span at 1418-1427 (DDGGAGGKGG) shows a compositional bias: gly residues. A phosphoserine mark is found at Ser-1454, Ser-1457, and Ser-1474. Phosphothreonine is present on Thr-1487. Ser-1494 carries the post-translational modification Phosphoserine. Residues 1495–1525 (LTRSEHSHSTTLPRDYSTLTSVSSHDSRLTA) are disordered. The span at 1503–1518 (STTLPRDYSTLTSVSS) shows a compositional bias: polar residues. Thr-1530 carries the post-translational modification Phosphothreonine. Fibronectin type-III domains follow at residues 1530–1625 (TPTR…VHPQ) and 1643–1739 (APGP…SQDG). Ser-1791 carries the post-translational modification Phosphoserine.

This sequence belongs to the integrin beta chain family. As to quaternary structure, heterodimer of an alpha and a beta subunit. Beta-4 associates with alpha-6. Interacts (via cytoplasmic region) with COL17A1 (via cytoplasmic region). Interacts (via cytoplasmic region) with DST isoform 3 (via N-terminus). Isoform beta-4a interacts (via cytoplasmic domain) with DST (via N-terminus). Interacts with RAC1. ITGA6:ITGB4 is found in a ternary complex with NRG1 and ERBB3. ITGA6:ITGB4 is found in a ternary complex with IGF1 and IGF1R. ITGA6:ITGB4 interacts with IGF2. Interacts with TMEM268; this interaction prevents ITGB4 degradation. Post-translationally, palmitoylated by DHHC3 at several cysteines of the membrane-proximal region, enhancing stability and cell surface expression. Palmitoylation also promotes secondary association with tertaspanins. In terms of tissue distribution, integrin alpha-6/beta-4 is predominantly expressed by epithelia. Isoform beta-4D is also expressed in colon and placenta. Isoform beta-4E is also expressed in epidermis, lung, duodenum, heart, spleen and stomach.

It localises to the cell membrane. The protein resides in the cell junction. It is found in the hemidesmosome. Integrin alpha-6/beta-4 is a receptor for laminin. Plays a critical structural role in the hemidesmosome of epithelial cells. Is required for the regulation of keratinocyte polarity and motility. ITGA6:ITGB4 binds to NRG1 (via EGF domain) and this binding is essential for NRG1-ERBB signaling. ITGA6:ITGB4 binds to IGF1 and this binding is essential for IGF1 signaling. ITGA6:ITGB4 binds to IGF2 and this binding is essential for IGF2 signaling. The protein is Integrin beta-4 (ITGB4) of Homo sapiens (Human).